Here is a 156-residue protein sequence, read N- to C-terminus: MPRRREVPKRKIIPDPKYKDKLVAKFTNSLMQSGKKATAEGILYGAFDIVRDRFKEEPIDVFRKALDNVKPKLEVKSRRVGGATYQVPVEVRPERRVALAMRWLVTYSRGRGEKTMRERLAAELVDAAQNRGNAVKKRDDTHKMAEANKAFAHYRW.

Belongs to the universal ribosomal protein uS7 family. As to quaternary structure, part of the 30S ribosomal subunit. Contacts proteins S9 and S11.

Its function is as follows. One of the primary rRNA binding proteins, it binds directly to 16S rRNA where it nucleates assembly of the head domain of the 30S subunit. Is located at the subunit interface close to the decoding center, probably blocks exit of the E-site tRNA. This Sorangium cellulosum (strain So ce56) (Polyangium cellulosum (strain So ce56)) protein is Small ribosomal subunit protein uS7.